The following is a 939-amino-acid chain: Serine/threonine-protein kinase STE20 (939 aa).

A disordered region spans residues Met1–Ser87. Ser2 carries the N-acetylserine modification. The span at Thr44–Thr57 shows a compositional bias: polar residues. Phosphoserine is present on residues Ser87 and Ser165. A Phosphothreonine modification is found at Thr167. Residue Ser169 is modified to Phosphoserine. Residues Asn176–Ser196 show a composition bias toward polar residues. Disordered regions lie at residues Asn176–Lys299 and Arg311–Ile331. Thr203 carries the post-translational modification Phosphothreonine. Residues Pro204–Asn231 show a composition bias toward polar residues. Residues Pro232 to Pro243 are compositionally biased toward basic residues. Low complexity-rich tracts occupy residues Lys251 to Ser283 and Ser320 to Ser330. Residues Ile337–Gly350 enclose the CRIB domain. Disordered stretches follow at residues Lys407 to Ala487 and Asn500 to Arg598. Polar residues-rich tracts occupy residues Thr408–Asn467 and Asn500–Ala527. Ser418 is modified (phosphoserine). Positions Pro434–Ala499 are BEM1-binding. Ser502, Ser547, and Ser562 each carry phosphoserine. Over residues Thr542–Thr552 the composition is skewed to low complexity. Residues Glu569 to Pro578 are compositionally biased toward polar residues. Thr573 carries the phosphothreonine modification. The segment covering Leu584–Glu597 has biased composition (basic and acidic residues). The residue at position 585 (Ser585) is a Phosphoserine. The Protein kinase domain maps to Tyr620–Ile871. ATP contacts are provided by residues Ile626–Val634 and Lys649. Asp739 serves as the catalytic Proton acceptor. Phosphothreonine is present on Thr773. Residues Ala899 to Asp908 show a composition bias toward acidic residues. The tract at residues Ala899–Lys939 is disordered. A Phosphoserine modification is found at Ser924. The residue at position 927 (Thr927) is a Phosphothreonine.

The protein belongs to the protein kinase superfamily. STE Ser/Thr protein kinase family. STE20 subfamily. Interacts with BEM1, CDC42, CLN2, STE4 and the 14-3-3 proteins BMH1 and BMH2. Autophosphorylated and phosphorylated by the CLN2-CDC28 complex in a cell cycle dependent manner. Post-translationally, autophosphorylated on serine residues.

The protein localises to the cytoplasm. It is found in the nucleus. The catalysed reaction is L-seryl-[protein] + ATP = O-phospho-L-seryl-[protein] + ADP + H(+). It catalyses the reaction L-threonyl-[protein] + ATP = O-phospho-L-threonyl-[protein] + ADP + H(+). MAP4K component of the MAPK pathway required for the mating pheromone response, haploid invasive growth and diploid pseudohyphal development. Links the pheromone response G-protein beta gamma subunits to downstream signaling components. Needed for mating in haploid cells, induction of a mating-specific gene FUS1, induction of mating-specific morphologies, and pheromone-induced proliferation arrest. Required for the regulation of the actin polarization and bud emergence during cell cycle in G1. Involved in the high osmolarity glycerol (HOG) response. Phosphorylates 'Thr-307' and 'Ser-302' or 'Ser-306' of STE11 and 'Ser-357' of MYO3. Phosphorylates histone H2B to form H2BS10ph during meiosis and H(2)O(2)-induced apoptosis. Its interaction with CDC42 is required for both invasive growth and the formation of pseudohyphae. Its interaction with STE4 is required for the pheromone signaling. The protein is Serine/threonine-protein kinase STE20 (STE20) of Saccharomyces cerevisiae (strain ATCC 204508 / S288c) (Baker's yeast).